The sequence spans 154 residues: Large ribosomal subunit protein uL13 (154 aa).

The protein belongs to the universal ribosomal protein uL13 family. In terms of assembly, part of the 50S ribosomal subunit.

Its function is as follows. This protein is one of the early assembly proteins of the 50S ribosomal subunit, although it is not seen to bind rRNA by itself. It is important during the early stages of 50S assembly. This Rhodospirillum centenum (strain ATCC 51521 / SW) protein is Large ribosomal subunit protein uL13.